Consider the following 243-residue polypeptide: DNA repair protein RecO (243 aa).

It belongs to the RecO family.

Functionally, involved in DNA repair and RecF pathway recombination. The chain is DNA repair protein RecO from Xylella fastidiosa (strain M23).